Here is a 125-residue protein sequence, read N- to C-terminus: MRPPPDPQARRRATHGRGLSAEALALLALMLKGYRPLARRFAASGGEIDLIVRRGRTIAFVEVKARATLEAAAIAIDGRKRARMSRAARAWLARHRLPADAILRADAVFVAPRRWPLHLPNAFEI.

It belongs to the UPF0102 family.

The polypeptide is UPF0102 protein Mpop_0474 (Methylorubrum populi (strain ATCC BAA-705 / NCIMB 13946 / BJ001) (Methylobacterium populi)).